An 85-amino-acid polypeptide reads, in one-letter code: Alpha-toxin Amm8 (85 aa).

The signal sequence occupies residues 1 to 19 (MNYLVMISLALLFMTGVES). The region spanning 21 to 83 (KDGYIVNDIN…VRTKGPGRCN (63 aa)) is the LCN-type CS-alpha/beta domain. Cystine bridges form between cysteine 31–cysteine 82, cysteine 35–cysteine 55, cysteine 41–cysteine 65, and cysteine 45–cysteine 67. A propeptide (removed by a carboxypeptidase) is located at residue arginine 85.

It belongs to the long (4 C-C) scorpion toxin superfamily. Sodium channel inhibitor family. Alpha subfamily. In terms of tissue distribution, expressed by the venom gland.

The protein resides in the secreted. Functionally, alpha toxins bind voltage-independently at site-3 of sodium channels (Nav) and inhibit the inactivation of the activated channels, thereby blocking neuronal transmission. The toxin principally slows the inactivation process of TTX-sensitive sodium channels. It discriminates neuronal versus muscular sodium channel, as it is more potent on rat brain Nav1.2/SCN2A (EC(50)=29 nM) than on rat skeletal muscle Nav1.4/SCN4A (EC(50)=416 nM). It also shows a weak activity on Nav1.7/SCN9A (EC(50)=1.76 uM). In vivo, the toxin produces pain hypersensibility to mechanical and thermal stimuli. It also exhibits potent analgesic activity (when injected intraperitoneally), increasing hot plate and tail flick withdrawal latencies in a dose-dependent fashion. This paradoxical analgesic action, is significantly suppressed by opioid receptor antagonists, suggesting a pain-induced analgesia mechanism that involves an endogenous opioid system. This led to hypothesis that pain relief induced by peripheral administration of Amm VIII may result from sensitization of primary afferent neurons and subsequent activation of an opioid-dependent noxious inhibitory control. The protein is Alpha-toxin Amm8 of Androctonus mauritanicus mauritanicus (Scorpion).